We begin with the raw amino-acid sequence, 146 residues long: Hemoglobin A/D subunit beta (146 aa).

The 145-residue stretch at 2–146 (HWTSEEKQYI…VAHALALGYH (145 aa)) folds into the Globin domain. His63 and His92 together coordinate heme b.

Belongs to the globin family. As to quaternary structure, hemoglobins A and D are heterotetramers of alpha-1, alpha-2 and two identical beta chains. As to expression, red blood cells.

Functionally, involved in oxygen transport from the lung to the various peripheral tissues. The protein is Hemoglobin A/D subunit beta of Aldabrachelys gigantea (Aldabra giant tortoise).